The sequence spans 282 residues: Undecaprenyl-diphosphatase (282 aa).

Transmembrane regions (helical) follow at residues 90 to 110 (YWLG…GLVC), 121 to 141 (LWVV…AEYV), 165 to 185 (LALI…LFLG), 194 to 214 (FGFL…IPDA), 228 to 248 (QLLV…SWLL), and 256 to 276 (LYWF…LLAV).

Belongs to the UppP family.

The protein resides in the cell membrane. The enzyme catalyses di-trans,octa-cis-undecaprenyl diphosphate + H2O = di-trans,octa-cis-undecaprenyl phosphate + phosphate + H(+). Its function is as follows. Catalyzes the dephosphorylation of undecaprenyl diphosphate (UPP). Confers resistance to bacitracin. The polypeptide is Undecaprenyl-diphosphatase (Mycobacterium leprae (strain Br4923)).